Here is a 66-residue protein sequence, read N- to C-terminus: Surface composition regulator (66 aa).

This sequence belongs to the GlgS family.

Functionally, major determinant of cell surface composition. Negatively regulates motility, adhesion and synthesis of biofilm exopolysaccharides. The chain is Surface composition regulator from Shigella dysenteriae serotype 1 (strain Sd197).